The following is a 320-amino-acid chain: uncharacterized protein (320 aa).

46–53 (DVPGVGKT) lines the ATP pocket.

Belongs to the MoxR family.

This is an uncharacterized protein from Bacillus subtilis (strain 168).